The chain runs to 492 residues: Prenylcysteine oxidase 1-like (492 aa).

Positions 1-21 are cleaved as a signal peptide; it reads MAHAARLLAALAALLAAAATG. Asn-340 carries N-linked (GlcNAc...) asparagine glycosylation.

It belongs to the prenylcysteine oxidase family. Requires FAD as cofactor.

The protein resides in the secreted. Its function is as follows. Likely to have oxidoreductase activity. Required in the mevalonate pathway to regulate prenylation and enhances the bactericidal activity of neutrophils. The polypeptide is Prenylcysteine oxidase 1-like (PCYOX1L) (Bos taurus (Bovine)).